The chain runs to 648 residues: Transcription termination factor FttA (648 aa).

A not required for dimerization, required for cleavage at some sites region spans residues 1 to 179 (MIKRETQVDQ…QVGRNIYRKP (179 aa)). The segment at 9–76 (DQILKDIRGI…ISIRPDPDVL (68 aa)) is KHa. The interval 77 to 144 (LPPEEAEKLI…WAPKVVRTPP (68 aa)) is KHb. Residues 185 to 395 (WIRITGLGGF…LVMESTYGGA (211 aa)) are metallo-beta-lactamase N-terminus. Residues H253, H255, D257, H258, H341, and D364 each coordinate Zn(2+). Residues 396–589 (NDIQMPREEA…MEVHTIDGFS (194 aa)) form a beta-Casp region. Residues 590 to 648 (GHADRRELMNYVAKVRPRPERVITVHGEPQKCLDLATSIHRKFGLSTRAPNNLDTIRLR) form a metallo-beta-lactamase C-terminus region. H615 lines the Zn(2+) pocket.

It belongs to the metallo-beta-lactamase superfamily. RNA-metabolizing metallo-beta-lactamase-like family. FttA subfamily. In terms of assembly, homodimer. Interacts with RNA polymerase (RNAP), interacts with the Spt4-Spt5 complex. The cofactor is Zn(2+).

Its activity is regulated as follows. EndoRNase activity is inhibited by 1,10-phenanthroline. Its function is as follows. Terminates transcription on the whole genome. Termination is linked to FttA-mediated RNA cleavage and does not require NTP hydrolysis. Cleaves endonucleolytically at the RNA exit channel of RNA polymerase (RNAP); the 5'-3' exonuclease activity of this protein degrades the nascent RNA released from RNAP. A single-stranded endoribonuclease (endoRNase) with a preference for cleavage at CA dinucleotides. Has 5'-3' exoribonuclease (exoRNase) activity on 5'-monophosphorylated RNA; this activity does not occur on 5'-tri-phosphorylated or 5'-OH substrates. Also has weak activity 5'-3' exodeoxyribonuclease activity on ssDNA. This Pyrococcus abyssi (strain GE5 / Orsay) protein is Transcription termination factor FttA.